A 376-amino-acid chain; its full sequence is Queuine tRNA-ribosyltransferase (376 aa).

The active-site Proton acceptor is aspartate 93. Substrate is bound by residues 93 to 97 (DSGGF), aspartate 147, glutamine 190, and glycine 217. The RNA binding stretch occupies residues 248-254 (GVGKPDD). The Nucleophile role is filled by aspartate 267. Positions 305, 307, 310, and 336 each coordinate Zn(2+).

Belongs to the queuine tRNA-ribosyltransferase family. As to quaternary structure, homodimer. Within each dimer, one monomer is responsible for RNA recognition and catalysis, while the other monomer binds to the replacement base PreQ1. Zn(2+) is required as a cofactor.

The enzyme catalyses 7-aminomethyl-7-carbaguanine + guanosine(34) in tRNA = 7-aminomethyl-7-carbaguanosine(34) in tRNA + guanine. The protein operates within tRNA modification; tRNA-queuosine biosynthesis. Its function is as follows. Catalyzes the base-exchange of a guanine (G) residue with the queuine precursor 7-aminomethyl-7-deazaguanine (PreQ1) at position 34 (anticodon wobble position) in tRNAs with GU(N) anticodons (tRNA-Asp, -Asn, -His and -Tyr). Catalysis occurs through a double-displacement mechanism. The nucleophile active site attacks the C1' of nucleotide 34 to detach the guanine base from the RNA, forming a covalent enzyme-RNA intermediate. The proton acceptor active site deprotonates the incoming PreQ1, allowing a nucleophilic attack on the C1' of the ribose to form the product. After dissociation, two additional enzymatic reactions on the tRNA convert PreQ1 to queuine (Q), resulting in the hypermodified nucleoside queuosine (7-(((4,5-cis-dihydroxy-2-cyclopenten-1-yl)amino)methyl)-7-deazaguanosine). The chain is Queuine tRNA-ribosyltransferase from Ruegeria pomeroyi (strain ATCC 700808 / DSM 15171 / DSS-3) (Silicibacter pomeroyi).